Here is a 366-residue protein sequence, read N- to C-terminus: Phospho-N-acetylmuramoyl-pentapeptide-transferase (366 aa).

Transmembrane regions (helical) follow at residues 27-47 (AAMF…IASL), 71-91 (TPTM…LLWA), 93-113 (LSNV…AIGF), 134-154 (LAIE…AAKI), 174-194 (ALLN…VSAG), 205-225 (GLAI…AYLA), 245-265 (LAVI…FNAP), 268-288 (AIFM…TVAV), 294-314 (IVMV…IIQV), and 343-363 (QVVI…LATL).

The protein belongs to the glycosyltransferase 4 family. MraY subfamily. Requires Mg(2+) as cofactor.

It is found in the cell inner membrane. It catalyses the reaction UDP-N-acetyl-alpha-D-muramoyl-L-alanyl-gamma-D-glutamyl-meso-2,6-diaminopimeloyl-D-alanyl-D-alanine + di-trans,octa-cis-undecaprenyl phosphate = di-trans,octa-cis-undecaprenyl diphospho-N-acetyl-alpha-D-muramoyl-L-alanyl-D-glutamyl-meso-2,6-diaminopimeloyl-D-alanyl-D-alanine + UMP. The protein operates within cell wall biogenesis; peptidoglycan biosynthesis. Catalyzes the initial step of the lipid cycle reactions in the biosynthesis of the cell wall peptidoglycan: transfers peptidoglycan precursor phospho-MurNAc-pentapeptide from UDP-MurNAc-pentapeptide onto the lipid carrier undecaprenyl phosphate, yielding undecaprenyl-pyrophosphoryl-MurNAc-pentapeptide, known as lipid I. This is Phospho-N-acetylmuramoyl-pentapeptide-transferase from Allorhizobium ampelinum (strain ATCC BAA-846 / DSM 112012 / S4) (Agrobacterium vitis (strain S4)).